Here is a 236-residue protein sequence, read N- to C-terminus: Glucosamine-6-phosphate deaminase (236 aa).

Catalysis depends on D67, which acts as the Proton acceptor; for enolization step. N136 serves as the catalytic For ring-opening step. The Proton acceptor; for ring-opening step role is filled by H138. E143 acts as the For ring-opening step in catalysis.

The protein belongs to the glucosamine/galactosamine-6-phosphate isomerase family. NagB subfamily.

It catalyses the reaction alpha-D-glucosamine 6-phosphate + H2O = beta-D-fructose 6-phosphate + NH4(+). It participates in amino-sugar metabolism; N-acetylneuraminate degradation; D-fructose 6-phosphate from N-acetylneuraminate: step 5/5. In terms of biological role, catalyzes the reversible isomerization-deamination of glucosamine 6-phosphate (GlcN6P) to form fructose 6-phosphate (Fru6P) and ammonium ion. The sequence is that of Glucosamine-6-phosphate deaminase from Lachnoclostridium phytofermentans (strain ATCC 700394 / DSM 18823 / ISDg) (Clostridium phytofermentans).